Consider the following 226-residue polypeptide: Thioredoxin domain-containing protein 9 (226 aa).

A Thioredoxin domain is found at Glu-75–Gly-180. Ser-188, Ser-221, and Ser-223 each carry phosphoserine.

In terms of assembly, forms ternary complexes with the chaperonin TCP1 complex, spanning the cylindrical chaperonin cavity and contacting at least 2 subunits.

Its subcellular location is the cytoplasm. The protein localises to the nucleus. It localises to the cytoskeleton. The protein resides in the microtubule organizing center. It is found in the centrosome. Its subcellular location is the midbody. Significantly diminishes the chaperonin TCP1 complex ATPase activity, thus negatively impacts protein folding, including that of actin or tubulin. This is Thioredoxin domain-containing protein 9 (Txndc9) from Rattus norvegicus (Rat).